The primary structure comprises 731 residues: Endopolyphosphatase (731 aa).

Residues Met-1–Ser-4 lie on the Cytoplasmic side of the membrane. The helical; Signal-anchor for type II membrane protein transmembrane segment at Arg-5–Val-25 threads the bilayer. Residues Pro-26–Thr-731 lie on the Vacuolar side of the membrane. An N-linked (GlcNAc...) asparagine glycan is attached at Asn-106. Positions Lys-375 to Pro-403 are disordered. The span at Lys-390–Lys-402 shows a compositional bias: basic residues. The N-linked (GlcNAc...) asparagine glycan is linked to Asn-433. The disordered stretch occupies residues Glu-456–Pro-522. Basic and acidic residues-rich tracts occupy residues Gln-457 to Met-474 and Gly-492 to Asp-501. Pro residues predominate over residues Pro-505–Ser-519. Residues Asn-534 and Asn-540 are each glycosylated (N-linked (GlcNAc...) asparagine). Residues Ala-626–Gln-706 are disordered. The span at Ala-636–Thr-686 shows a compositional bias: acidic residues. Positions Lys-691–Gln-706 are enriched in basic residues.

Belongs to the endopolyphosphatase PPN1 family. A divalent metal cation serves as cofactor. Post-translationally, processing by proteases in the vacuole may be required for activation.

The protein resides in the vacuole membrane. It carries out the reaction [phosphate](n+1) + n H2O = (n+1) phosphate + n H(+). In terms of biological role, catalyzes the hydrolysis of inorganic polyphosphate (polyP) chains of many hundreds of phosphate residues into shorter lengths. This chain is Endopolyphosphatase (epp-1), found in Neurospora crassa (strain ATCC 24698 / 74-OR23-1A / CBS 708.71 / DSM 1257 / FGSC 987).